The sequence spans 120 residues: MTEPTRSIDDLSPARVTTAFDLPGHTTVRSLGVAQGIVVRSRSIVGSFGASLQTIFGGNITLYTSLCEKARQQAFDKMLADARKLGANAIVAMRYDSTEIGSGVTEVICYGTAVRVTQDA.

It belongs to the UPF0145 family.

This chain is UPF0145 protein Bcenmc03_5217, found in Burkholderia orbicola (strain MC0-3).